The chain runs to 212 residues: External core antigen (212 aa).

The first 19 residues, 1–19 (MQLFHLCLIIFCSCPTVQA), serve as a signal peptide directing secretion. The segment at 25–27 (GWL) is HBEAG. Residues 165–212 (NAPILSTLPETTVVRQRGRAPRRRTPSPRRRRSQSPRRRRSQSPASQC) form a disordered region. A compositionally biased stretch (basic residues) spans 180 to 205 (QRGRAPRRRTPSPRRRRSQSPRRRRS). One copy of the 1; half-length repeat lies at 184-190 (APRRRTP). Positions 184-206 (APRRRTPSPRRRRSQSPRRRRSQ) are 3 X 8 AA repeats of S-P-R-R-R-R-S-Q. Residues 184-212 (APRRRTPSPRRRRSQSPRRRRSQSPASQC) constitute a propeptide that is removed on maturation. Tandem repeats lie at residues 191–198 (SPRRRRSQ) and 199–206 (SPRRRRSQ).

This sequence belongs to the orthohepadnavirus precore antigen family. Homodimerizes. Phosphorylated. In terms of processing, cleaved by host furin.

Its subcellular location is the secreted. It localises to the host nucleus. May regulate immune response to the intracellular capsid in acting as a T-cell tolerogen, by having an immunoregulatory effect which prevents destruction of infected cells by cytotoxic T-cells. This immune regulation may predispose to chronicity during perinatal infections and prevent severe liver injury during adult infections. This chain is External core antigen, found in Hepatitis B virus genotype H subtype adw4 (isolate Nicaragua/2928Nic/1997) (HBV-H).